Reading from the N-terminus, the 1142-residue chain is MHIAVDNLTISVPKIDKPTKAALDYVELLRESFSAKKRQKFSKASLAIRPSDFPDLSNQQLCDILVRVAYNGSHIDEDFRKHVLDLVEDQSLTWNQVLLSVIRTQSDQLYMKSQLCELITEMIRFVQIKSFHDPKHADSLISVILPTFVFLTKLILELLSDEDEMETIQIEYETKFPPYHKPLQALNTLIHDNLCGPLLAMYRSSEEVTRQLVLCSEAFSKLERPDESSVGLLDLILEKHQDNCKPTKYEYTPDGLAAYDLKNPSVRILVPIFACFRCHETSKQMAETVQIFVDIMRVSGDDVVFDLLHAAILLKCEESNNLLHLSKQHRLDFRWQSTTFFYKKLPQIIEHLVSFGKVTAEDVQKGMERALNDLTMLFDVADISWQNASFLTVLNALEPLIGSEAANPLRHRRREYMRKTASLTALADSDEKLIENTDIDRLLNAVKQVMNLQFGQNEEFYQEFIRKVNGDDCEDFDAVMSILISEGRLLEVGKAFAMKSKLAQYPSELSLDERIKKFDETFLLLTRIIVKFPGLSIGLLVNGGPGEISIADSIFYRWSMWYVKRVPRKDKSEEKSEEELEAMRIQAKVLIEEINKEVGIEEEIEEEEEDIEPEVVKEMKESGTEKEKEEEEEDGNKETKNETANDEEMPGDEQKTEEKMDTSETPAEPPIQQQSTPEDPPKVEEPAERINQEKPEEKPKEPLEPTWNEMNCALPRISRKKARRYLGLLKQGNPFWSTDNNSLNIGAILAALPSMGKLLIEEHNEEKHRVDRKSAEEHMANIIHALESMPCLFVCLVQWVDCAPASPARTLLAKTMKNALEKRVSSSSASIADDTNLPKWRFILSTCNEMIHELTDRVPVFPDITCTAFSAARRLCPFVTRDEIPDSTKLKHAWYYMCQQSWTSPHALRLLEHANIHSEYNTWIHLYITKIVGGGCGEIMKDQVDMIFGMLMMDDLNVIIRMHEIMMDFWLSEEAGNLQLDGRFDPLSMTAVIRLMANVMLISEWTLDRLINDGPPLVEFDFTSAMTPEPEDPLRREKWVFLLRQMLDRTVNRLFKILRQGVLCTVVNTIVRLIKAIAGSADCKAKRLLIKRIPPEIVFQLAYIEPQCADYALMNAYCDPKNEEHTRTKIRFLCALRRSHIL.

The span at 600-613 (IEEEIEEEEEDIEP) shows a compositional bias: acidic residues. The disordered stretch occupies residues 600–706 (IEEEIEEEEE…EKPKEPLEPT (107 aa)). Composition is skewed to basic and acidic residues over residues 614 to 627 (EVVKEMKESGTEKE), 652 to 662 (DEQKTEEKMDT), and 679 to 703 (DPPKVEEPAERINQEKPEEKPKEPL).

It is found in the nucleus. It localises to the cytoplasm. Functionally, participates in the inductive signaling pathway downstream of let-60 Ras and the RAF/MAP kinase cascade to regulate specification and differentiation of many cell types. Positively regulates the fate of vulval precursor cells. Required for induction of the P12 and excretory duct cell fates. In males, it is also required for proper formation of spicules. Does not function in the signaling pathway that promotes exit from pachytene. This Caenorhabditis briggsae protein is Protein lin-25.